A 252-amino-acid chain; its full sequence is Urease accessory protein UreH (252 aa).

Belongs to the UreD family. As to quaternary structure, ureH, UreF and UreG form a complex that acts as a GTP-hydrolysis-dependent molecular chaperone, activating the urease apoprotein by helping to assemble the nickel containing metallocenter of UreC. The UreE protein probably delivers the nickel.

The protein resides in the cytoplasm. In terms of biological role, required for maturation of urease via the functional incorporation of the urease nickel metallocenter. This Helicobacter hepaticus (strain ATCC 51449 / 3B1) protein is Urease accessory protein UreH.